The chain runs to 398 residues: L-glutamine--4-(methylsulfanyl)-2-oxobutanoate aminotransferase (398 aa).

Residue Lys240 is modified to N6-(pyridoxal phosphate)lysine.

The protein belongs to the class-I pyridoxal-phosphate-dependent aminotransferase family. MtnE subfamily. The cofactor is pyridoxal 5'-phosphate.

It catalyses the reaction 4-methylsulfanyl-2-oxobutanoate + L-glutamine = 2-oxoglutaramate + L-methionine. It functions in the pathway amino-acid biosynthesis; L-methionine biosynthesis via salvage pathway; L-methionine from S-methyl-5-thio-alpha-D-ribose 1-phosphate: step 6/6. Involved in the methylthioribose (MTR) recycling pathway. Catalyzes the formation of methionine from 2-keto-4-methylthiobutyrate (KMTB). This chain is L-glutamine--4-(methylsulfanyl)-2-oxobutanoate aminotransferase, found in Bacillus subtilis (strain 168).